Reading from the N-terminus, the 158-residue chain is 2-C-methyl-D-erythritol 2,4-cyclodiphosphate synthase (158 aa).

The a divalent metal cation site is built by aspartate 9 and histidine 11. Residues 9–11 (DVH) and 35–36 (HS) contribute to the 4-CDP-2-C-methyl-D-erythritol 2-phosphate site. Position 43 (histidine 43) interacts with a divalent metal cation. 4-CDP-2-C-methyl-D-erythritol 2-phosphate contacts are provided by residues 57–59 (DIG), 62–66 (FPDTD), 101–107 (AQAPKMA), 133–136 (TTTE), phenylalanine 140, and arginine 143.

It belongs to the IspF family. In terms of assembly, homotrimer. Requires a divalent metal cation as cofactor.

The enzyme catalyses 4-CDP-2-C-methyl-D-erythritol 2-phosphate = 2-C-methyl-D-erythritol 2,4-cyclic diphosphate + CMP. It participates in isoprenoid biosynthesis; isopentenyl diphosphate biosynthesis via DXP pathway; isopentenyl diphosphate from 1-deoxy-D-xylulose 5-phosphate: step 4/6. Involved in the biosynthesis of isopentenyl diphosphate (IPP) and dimethylallyl diphosphate (DMAPP), two major building blocks of isoprenoid compounds. Catalyzes the conversion of 4-diphosphocytidyl-2-C-methyl-D-erythritol 2-phosphate (CDP-ME2P) to 2-C-methyl-D-erythritol 2,4-cyclodiphosphate (ME-CPP) with a corresponding release of cytidine 5-monophosphate (CMP). The polypeptide is 2-C-methyl-D-erythritol 2,4-cyclodiphosphate synthase (Vibrio vulnificus (strain CMCP6)).